We begin with the raw amino-acid sequence, 546 residues long: Chaperonin GroEL (546 aa).

ATP-binding positions include 30–33 (TLGP), 87–91 (DGTTT), Gly-414, 477–479 (NAL), and Asp-493.

This sequence belongs to the chaperonin (HSP60) family. Forms a cylinder of 14 subunits composed of two heptameric rings stacked back-to-back. Interacts with the co-chaperonin GroES.

It is found in the cytoplasm. It catalyses the reaction ATP + H2O + a folded polypeptide = ADP + phosphate + an unfolded polypeptide.. In terms of biological role, together with its co-chaperonin GroES, plays an essential role in assisting protein folding. The GroEL-GroES system forms a nano-cage that allows encapsulation of the non-native substrate proteins and provides a physical environment optimized to promote and accelerate protein folding. The chain is Chaperonin GroEL from Syntrophomonas wolfei subsp. wolfei (strain DSM 2245B / Goettingen).